We begin with the raw amino-acid sequence, 263 residues long: (2Z,6E)-farnesyl diphosphate synthase (263 aa).

The active site involves Asp40. Asp40 provides a ligand contact to Mg(2+). Substrate contacts are provided by residues 41–44 (GNRR), Trp45, and 86–88 (STE). Asn89 functions as the Proton acceptor in the catalytic mechanism. Residues Arg92, Arg212, and 218–220 (RLS) each bind substrate. Glu231 provides a ligand contact to Mg(2+).

Belongs to the UPP synthase family. Z-FPP synthase subfamily. In terms of assembly, homodimer. Requires Mg(2+) as cofactor.

It localises to the cell membrane. It carries out the reaction isopentenyl diphosphate + (2E)-geranyl diphosphate = (2Z,6E)-farnesyl diphosphate + diphosphate. Its function is as follows. Catalyzes the condensation of only one isopentenyl pyrophosphate (IPP) unit in the cis configuration to E-geranyl diphosphate (E-GPP) generating the 15 carbon product (2Z,6E)-farnesyl diphosphate (Z-FPP or EZ-FPP). Z-FPP is the precursor of decaprenyl diphosphate, which has a central role in the biosynthesis of the mycobacterial cell wall. The sequence is that of (2Z,6E)-farnesyl diphosphate synthase (uppS) from Mycolicibacterium smegmatis (strain ATCC 700084 / mc(2)155) (Mycobacterium smegmatis).